Consider the following 678-residue polypeptide: uncharacterized protein (678 aa).

2 disordered regions span residues 123–156 and 381–417; these read TPLSEDRKPTSNNEEEDDADEAKSSNADSSTDSV and TETTETEGVDKEDSDKASSVQGNEDEVPDTASETEHS.

It is found in the cytoplasm. This is an uncharacterized protein from Schizosaccharomyces pombe (strain 972 / ATCC 24843) (Fission yeast).